A 217-amino-acid chain; its full sequence is Small ribosomal subunit protein uS3 (217 aa).

The region spanning 38–106 (IRKFLKKRLS…KVTLDIQEVR (69 aa)) is the KH type-2 domain.

This sequence belongs to the universal ribosomal protein uS3 family. In terms of assembly, part of the 30S ribosomal subunit. Forms a tight complex with proteins S10 and S14.

Binds the lower part of the 30S subunit head. Binds mRNA in the 70S ribosome, positioning it for translation. This is Small ribosomal subunit protein uS3 from Desulfotalea psychrophila (strain LSv54 / DSM 12343).